A 488-amino-acid chain; its full sequence is MADVRKLKNYIDGEWVESKTDKYEDVINPATGEVLCQVPISTRAELDQAAVIAEQAFEKWSQVAVPRRARVLFSFQQLLIQHKEELARLITLENGKNLSEARGEVQRGIENVEFAAGAPTLMMGDSLASIATDVEAANYRYPVGVVGGIAPFNFPMMVPCWMFPMAIALGNSFILKPSERTPLLMEKLVELFSEAGLPKGVFNVVYGAHDVVNGILENEIIKAVSFVGSKPVGEYVYKTGSANLKRVQALTGAKNHTIVLNDADLEDTVTNVISAAFGSAGERCMACAVVTVEEDIADEFLEALRTAAKNVKIGNGLDDGVFLGPVIREENQKRTIAYIEKGVEEGAKLTVDGRETGLSEGHFVGPTILEDVTTDMTIWKDEIFAPVLSVIRVKNLQEAVRVANLSEFANGACIFTNNAKAIRYFREKIDAGMLGVNLGVPAPMAFFPFSGWKSSFYGTLHANGKDSVDFYTHKKVVTARYSLKGYEE.

7 residues coordinate NAD(+): A150, F152, K176, E179, R180, S229, and T251. The Nucleophile role is filled by C284. An NAD(+)-binding site is contributed by E382.

This sequence belongs to the aldehyde dehydrogenase family. IolA subfamily. Homotetramer.

It carries out the reaction 3-oxopropanoate + NAD(+) + CoA + H2O = hydrogencarbonate + acetyl-CoA + NADH + H(+). The catalysed reaction is 2-methyl-3-oxopropanoate + NAD(+) + CoA + H2O = propanoyl-CoA + hydrogencarbonate + NADH + H(+). Its pathway is polyol metabolism; myo-inositol degradation into acetyl-CoA; acetyl-CoA from myo-inositol: step 7/7. Functionally, catalyzes the oxidation of malonate semialdehyde (MSA) and methylmalonate semialdehyde (MMSA) into acetyl-CoA and propanoyl-CoA, respectively. Is involved in a myo-inositol catabolic pathway. Bicarbonate, and not CO2, is the end-product of the enzymatic reaction. In Listeria monocytogenes serotype 4a (strain HCC23), this protein is Malonate-semialdehyde dehydrogenase.